Consider the following 94-residue polypeptide: Large ribosomal subunit protein uL23 (94 aa).

Belongs to the universal ribosomal protein uL23 family. Part of the 50S ribosomal subunit. Contacts protein L29, and trigger factor when it is bound to the ribosome.

Its function is as follows. One of the early assembly proteins it binds 23S rRNA. One of the proteins that surrounds the polypeptide exit tunnel on the outside of the ribosome. Forms the main docking site for trigger factor binding to the ribosome. The chain is Large ribosomal subunit protein uL23 from Trichlorobacter lovleyi (strain ATCC BAA-1151 / DSM 17278 / SZ) (Geobacter lovleyi).